Consider the following 179-residue polypeptide: Replication restart protein DnaT (179 aa).

Positions 156–179 (GGLPKRDVNTVSEPDSQIPPGFRG) are disordered.

The protein belongs to the DnaT family. As to quaternary structure, homooligomerizes. Interacts with PriB. Component of the replication restart primosome. Primosome assembly occurs via a 'hand-off' mechanism. PriA binds to replication forks, subsequently PriB then DnaT bind; DnaT then displaces ssDNA to generate the helicase loading substrate.

In terms of biological role, involved in the restart of stalled replication forks, which reloads the replicative helicase on sites other than the origin of replication. Can function in multiple replication restart pathways. Displaces ssDNA from a PriB-ssDNA complex. Probably forms a spiral filament on ssDNA. In Escherichia coli O17:K52:H18 (strain UMN026 / ExPEC), this protein is Replication restart protein DnaT.